Reading from the N-terminus, the 368-residue chain is Peptide chain release factor 2 (368 aa).

The residue at position 248 (Gln-248) is an N5-methylglutamine.

The protein belongs to the prokaryotic/mitochondrial release factor family. In terms of processing, methylated by PrmC. Methylation increases the termination efficiency of RF2.

Its subcellular location is the cytoplasm. Its function is as follows. Peptide chain release factor 2 directs the termination of translation in response to the peptide chain termination codons UGA and UAA. The chain is Peptide chain release factor 2 from Corynebacterium glutamicum (strain R).